Here is a 328-residue protein sequence, read N- to C-terminus: Alanine racemase (328 aa).

Lysine 33 serves as the catalytic Proton acceptor; specific for D-alanine. Lysine 33 bears the N6-(pyridoxal phosphate)lysine mark. Arginine 118 serves as a coordination point for substrate. The active-site Proton acceptor; specific for L-alanine is the tyrosine 237. A substrate-binding site is contributed by methionine 283.

Belongs to the alanine racemase family. It depends on pyridoxal 5'-phosphate as a cofactor.

The enzyme catalyses L-alanine = D-alanine. It functions in the pathway amino-acid biosynthesis; D-alanine biosynthesis; D-alanine from L-alanine: step 1/1. Its function is as follows. Catalyzes the interconversion of L-alanine and D-alanine. May also act on other amino acids. The protein is Alanine racemase (alr) of Campylobacter jejuni subsp. doylei (strain ATCC BAA-1458 / RM4099 / 269.97).